The sequence spans 252 residues: MLLCIDIGNTNTVLATFDGDELVHSWRIKTDALSTADELGLMFRGLLAGDAVEVTGVAACSTVPTALRSVRTMLDRYYPDLPHMIVEPGVRTGVQLAIDNPKEVGADRVVNTLATYTLYGGPSIVVDFGTTTNFDVISGRGEFLGGAFAPGIEISFDALAARAAQLRKVEATRPRSVIGKNTVECLQAGLYFGFAGQVDRIVERMVEELGDVRAVIATGGLAPLVIKECRTITHHEPMITLIGLRMVYDRNV.

6–13 (DIGNTNTV) provides a ligand contact to ATP. 105–108 (GADR) is a substrate binding site. Aspartate 107 acts as the Proton acceptor in catalysis. Residue aspartate 127 coordinates K(+). Threonine 130 lines the ATP pocket. Substrate is bound at residue threonine 182.

The protein belongs to the type III pantothenate kinase family. As to quaternary structure, homodimer. Requires NH4(+) as cofactor. It depends on K(+) as a cofactor.

The protein resides in the cytoplasm. It catalyses the reaction (R)-pantothenate + ATP = (R)-4'-phosphopantothenate + ADP + H(+). It functions in the pathway cofactor biosynthesis; coenzyme A biosynthesis; CoA from (R)-pantothenate: step 1/5. Catalyzes the phosphorylation of pantothenate (Pan), the first step in CoA biosynthesis. This chain is Type III pantothenate kinase, found in Salinispora arenicola (strain CNS-205).